We begin with the raw amino-acid sequence, 704 residues long: Fibulin-1 (704 aa).

The first 25 residues, 1 to 25, serve as a signal peptide directing secretion; sequence MDKLRGARPLRLLLLLLALLPALRG. Disulfide bonds link C33–C59, C34–C66, C47–C67, C76–C107, C89–C108, C110–C134, C111–C141, C124–C142, C181–C191, C187–C200, C202–C215, C221–C234, C228–C243, C249–C261, C267–C280, C274–C289, C295–C307, C313–C326, C320–C335, C342–C355, C361–C374, C368–C383, C385–C398, C404–C416, C412–C425, C427–C440, C446–C455, C451–C464, C466–C480, C486–C499, C495–C508, C510–C524, C530–C543, C537–C552, and C557–C578. Anaphylatoxin-like domains lie at 33-74, 75-109, and 110-142; these read CCDK…LEEH, YCSD…KCCY, and CCLL…RACC. N96 carries an N-linked (GlcNAc...) asparagine glycan. The EGF-like 1 domain occupies 177–216; that stretch reads LHDGCRGGGPCSQQCRDTGSSYVCSCFVGYQLQPDGVNCE. The EGF-like 2; calcium-binding domain occupies 217 to 262; it reads DINECITGTHSCGIGQTCVNTLGSFRCQRDTSCGTGYELTDDSRCK. The 46-residue stretch at 263–308 folds into the EGF-like 3; calcium-binding domain; the sequence is DIDECETGTHNCPPDFICQNTPGSFRCRPKLQCMNGFIQDALGNCI. The 48-residue stretch at 309–356 folds into the EGF-like 4; calcium-binding domain; the sequence is DINECLSTNMPCPAGQICINTDGSYTCQRISPSCGRGYHLNEDGTRCV. In terms of domain architecture, EGF-like 5; calcium-binding spans 357-399; it reads DVDECSSSDQPCGEGHVCINGPGNYRCECKSGYSFDVISRTCI. A self-association and FN1-binding region spans residues 357-441; the sequence is DVDECSSSDQ…KLSSDGRSCE (85 aa). In terms of domain architecture, EGF-like 6; calcium-binding spans 400–441; it reads DINECRRYPGRLCAHKCENTPGSYYCTCTMGFKLSSDGRSCE. The EGF-like 7; calcium-binding domain maps to 442–481; it reads DLNECESSPCSQECANVYGSYQCYCRRGFQLSDIDGISCE. Residues 482-525 form the EGF-like 8; calcium-binding domain; that stretch reads DIDECALPTGGHICSFRCINIPGSFQCTCPSTGYRLAPNARNCQ. In terms of domain architecture, EGF-like 9; calcium-binding spans 526 to 579; sequence DIDECVAETHNCSFNETCFNIQGGFRCLSLECPENYRKSGDTVRLEKTDTIRCI. 2 N-linked (GlcNAc...) asparagine glycosylation sites follow: N536 and N540.

Belongs to the fibulin family. In terms of assembly, homomultimerizes and interacts with various extracellular matrix components.

The protein resides in the secreted. It localises to the extracellular space. It is found in the extracellular matrix. Incorporated into fibronectin-containing matrix fibers. May play a role in cell adhesion and migration along protein fibers within the extracellular matrix (ECM). Could be important for certain developmental processes and contribute to the supramolecular organization of ECM architecture, in particular to those of basement membranes. The chain is Fibulin-1 (FBLN1) from Gallus gallus (Chicken).